The primary structure comprises 1098 residues: Ran-binding protein 16 (1098 aa).

The protein belongs to the exportin family. As to quaternary structure, binds to nucleoporins and the GTP-bound form of Ran.

It is found in the cytoplasm. The protein localises to the nucleus. May function as a nuclear transport receptor. The chain is Ran-binding protein 16 (Ranbp16) from Drosophila melanogaster (Fruit fly).